The sequence spans 210 residues: Protein-L-isoaspartate O-methyltransferase (210 aa).

Ser52 is a catalytic residue.

It belongs to the methyltransferase superfamily. L-isoaspartyl/D-aspartyl protein methyltransferase family.

Its subcellular location is the cytoplasm. The enzyme catalyses [protein]-L-isoaspartate + S-adenosyl-L-methionine = [protein]-L-isoaspartate alpha-methyl ester + S-adenosyl-L-homocysteine. In terms of biological role, catalyzes the methyl esterification of L-isoaspartyl residues in peptides and proteins that result from spontaneous decomposition of normal L-aspartyl and L-asparaginyl residues. It plays a role in the repair and/or degradation of damaged proteins. The polypeptide is Protein-L-isoaspartate O-methyltransferase (Protochlamydia amoebophila (strain UWE25)).